A 61-amino-acid chain; its full sequence is Putative antitoxin VapB13 (61 aa).

This sequence belongs to the UPF0165 family.

Possibly the antitoxin component of a type II toxin-antitoxin (TA) system. Its cognate toxin is VapC13 (Potential). The sequence is that of Putative antitoxin VapB13 (vapB13) from Archaeoglobus fulgidus (strain ATCC 49558 / DSM 4304 / JCM 9628 / NBRC 100126 / VC-16).